The sequence spans 38 residues: Photosystem II reaction center protein X (38 aa).

The chain crosses the membrane as a helical span at residues 9 to 29 (IASLTAGALVLSAIGIALIII).

This sequence belongs to the PsbX family. Type 1 subfamily. PSII is composed of 1 copy each of membrane proteins PsbA, PsbB, PsbC, PsbD, PsbE, PsbF, PsbH, PsbI, PsbJ, PsbK, PsbL, PsbM, PsbT, PsbX, PsbY, PsbZ, Psb30/Ycf12, at least 3 peripheral proteins of the oxygen-evolving complex and a large number of cofactors. It forms dimeric complexes.

Its subcellular location is the plastid. It is found in the chloroplast thylakoid membrane. Its function is as follows. Involved in the binding and/or turnover of quinones at the Q(B) site of photosystem II (PSII). PSII is a light-driven water plastoquinone oxidoreductase, using light energy to abstract electrons from H(2)O, generating a proton gradient subsequently used for ATP formation. This Thalassiosira pseudonana (Marine diatom) protein is Photosystem II reaction center protein X.